The sequence spans 529 residues: Bifunctional purine biosynthesis protein PurH (529 aa).

Residues 1-148 (MQQRRPIRRA…KNHKDVAIVV (148 aa)) enclose the MGS-like domain. At K287 the chain carries N6-acetyllysine.

The protein belongs to the PurH family.

The enzyme catalyses (6R)-10-formyltetrahydrofolate + 5-amino-1-(5-phospho-beta-D-ribosyl)imidazole-4-carboxamide = 5-formamido-1-(5-phospho-D-ribosyl)imidazole-4-carboxamide + (6S)-5,6,7,8-tetrahydrofolate. It carries out the reaction IMP + H2O = 5-formamido-1-(5-phospho-D-ribosyl)imidazole-4-carboxamide. Its pathway is purine metabolism; IMP biosynthesis via de novo pathway; 5-formamido-1-(5-phospho-D-ribosyl)imidazole-4-carboxamide from 5-amino-1-(5-phospho-D-ribosyl)imidazole-4-carboxamide (10-formyl THF route): step 1/1. The protein operates within purine metabolism; IMP biosynthesis via de novo pathway; IMP from 5-formamido-1-(5-phospho-D-ribosyl)imidazole-4-carboxamide: step 1/1. This chain is Bifunctional purine biosynthesis protein PurH, found in Escherichia coli O139:H28 (strain E24377A / ETEC).